The sequence spans 299 residues: AT-hook motif nuclear-localized protein 25 (299 aa).

2 disordered regions span residues 1-87 (MSSY…RDSP) and 216-251 (EEET…CESN). Composition is skewed to basic and acidic residues over residues 14–23 (HLQRPEDSRT) and 33–42 (NRSEADEAKA). 2 stretches are compositionally biased toward low complexity: residues 44–72 (TTPT…PAGS) and 224–239 (TTGV…QSSE). Positions 63-75 (RRPRGRPAGSKNK) form a DNA-binding region, a.T hook. One can recognise a PPC domain in the interval 87–233 (PNVLRSHVLE…TTGVQQQQPE (147 aa)). The span at 240–251 (VTGSGAQACESN) shows a compositional bias: polar residues.

In terms of assembly, homodimer. Interacts with AHL27 and AHL29. As to expression, expressed in seedlings, leaves, stems, floral tips and flowers.

The protein localises to the nucleus. Functionally, transcription factor that specifically binds AT-rich DNA sequences related to the nuclear matrix attachment regions (MARs). Binds the DNA sequence GNFEI (GA-negative feedback element I) in the GA3OX1 promoter. Binding to GNFEI sequence is required for GA-negative feedback regulation of GA3OX1. This Arabidopsis thaliana (Mouse-ear cress) protein is AT-hook motif nuclear-localized protein 25.